We begin with the raw amino-acid sequence, 383 residues long: 8-amino-7-oxononanoate synthase (383 aa).

Residue Arg-21 participates in substrate binding. 108 to 109 (GY) provides a ligand contact to pyridoxal 5'-phosphate. His-133 provides a ligand contact to substrate. Residues Ser-179, His-207, and Thr-233 each coordinate pyridoxal 5'-phosphate. At Lys-236 the chain carries N6-(pyridoxal phosphate)lysine. Thr-350 provides a ligand contact to substrate.

Belongs to the class-II pyridoxal-phosphate-dependent aminotransferase family. BioF subfamily. In terms of assembly, homodimer. It depends on pyridoxal 5'-phosphate as a cofactor.

It carries out the reaction 6-carboxyhexanoyl-[ACP] + L-alanine + H(+) = (8S)-8-amino-7-oxononanoate + holo-[ACP] + CO2. It participates in cofactor biosynthesis; biotin biosynthesis. Its function is as follows. Catalyzes the decarboxylative condensation of pimeloyl-[acyl-carrier protein] and L-alanine to produce 8-amino-7-oxononanoate (AON), [acyl-carrier protein], and carbon dioxide. This is 8-amino-7-oxononanoate synthase from Yersinia pseudotuberculosis serotype IB (strain PB1/+).